Here is a 507-residue protein sequence, read N- to C-terminus: Glutamate--tRNA ligase (507 aa).

The short motif at 14 to 24 (PSPTGYLHIGG) is the 'HIGH' region element. The 'KMSKS' region signature appears at 261 to 265 (KLSKR). ATP is bound at residue Lys264.

The protein belongs to the class-I aminoacyl-tRNA synthetase family. Glutamate--tRNA ligase type 1 subfamily. As to quaternary structure, monomer.

It is found in the cytoplasm. The catalysed reaction is tRNA(Glu) + L-glutamate + ATP = L-glutamyl-tRNA(Glu) + AMP + diphosphate. Functionally, catalyzes the attachment of glutamate to tRNA(Glu) in a two-step reaction: glutamate is first activated by ATP to form Glu-AMP and then transferred to the acceptor end of tRNA(Glu). The chain is Glutamate--tRNA ligase from Roseiflexus castenholzii (strain DSM 13941 / HLO8).